Reading from the N-terminus, the 351-residue chain is GDSL esterase/lipase At3g53100 (351 aa).

The first 24 residues, 1–24 (MQKMRVSGFRVLLLVSCFFCKSKG), serve as a signal peptide directing secretion. Catalysis depends on Ser36, which acts as the Nucleophile. N-linked (GlcNAc...) asparagine glycosylation is found at Asn234, Asn254, and Asn318. Active-site residues include Asp326 and His329.

The protein belongs to the 'GDSL' lipolytic enzyme family.

The protein resides in the secreted. This Arabidopsis thaliana (Mouse-ear cress) protein is GDSL esterase/lipase At3g53100.